The following is a 663-amino-acid chain: Polyunsaturated fatty acid lipoxygenase ALOX15 (663 aa).

Residues 2–115 (GVYRVCVSTG…VQSLPVGTGC (114 aa)) form the PLAT domain. The Lipoxygenase domain occupies 116–663 (TTVGDPQGLF…PSIVENSVAI (548 aa)). Positions 361, 366, 541, 545, and 663 each coordinate Fe cation.

The protein belongs to the lipoxygenase family. As to quaternary structure, interacts with PEBP1; in response to IL13/interleukin-13, prevents the interaction of PEBP1 with RAF1 to activate the ERK signaling cascade. It depends on Fe cation as a cofactor. In terms of tissue distribution, detected in reticulocytes (at protein level).

The protein localises to the cytoplasm. It is found in the cytosol. It localises to the cell membrane. Its subcellular location is the lipid droplet. It catalyses the reaction (5Z,8Z,11Z,14Z)-eicosatetraenoate + O2 = (12S)-hydroperoxy-(5Z,8Z,10E,14Z)-eicosatetraenoate. The enzyme catalyses (5Z,8Z,11Z,14Z)-eicosatetraenoate + O2 = (15S)-hydroperoxy-(5Z,8Z,11Z,13E)-eicosatetraenoate. The catalysed reaction is (9Z,12Z)-octadecadienoate + O2 = (13S)-hydroperoxy-(9Z,11E)-octadecadienoate. It carries out the reaction (5Z,8Z,11Z,14Z)-eicosatetraenoate + 2 O2 = (14R,15S)-dihydroperoxy-(5Z,8Z,10E,12E)-eicosatetraenoate. It catalyses the reaction (5Z,8Z,11Z,14Z)-eicosatetraenoate + 2 O2 = (8S,15S)-dihydroperoxy-(5Z,9E,11Z,13E)-eicosatetraenoate. The enzyme catalyses (14S,15R)-epoxy-(5Z,8Z,11Z)-eicosatrienoate + O2 = (8S)-hydroperoxy-(14S,15R)-epoxy-(5Z,9E,11Z)-eicosatrienoate. The catalysed reaction is (14S,15R)-epoxy-(5Z,8Z,11Z)-eicosatrienoate + O2 = (12S)-hydroperoxy-(14S,15R)-epoxy-(5Z,8Z,10E)-eicosatrienoate. It carries out the reaction (14R,15S)-epoxy-(5Z,8Z,11Z)-eicosatrienoate + O2 = (5S)-hydroperoxy-(14R,15S)-epoxy-(6E,8Z,11Z)-eicosatrienoate. It catalyses the reaction (14R,15S)-epoxy-(5Z,8Z,11Z)-eicosatrienoate + O2 = (12S)-hydroperoxy-(14R,15S)-epoxy-(5Z,8Z,10E)-eicosatrienoate. The enzyme catalyses (15R)-hydroperoxy-(5Z,8Z,11Z,13E)-eicosatetraenoate = 15-oxo-(5Z,8Z,11Z,13E)-eicosatetraenoate + H2O. The catalysed reaction is (15S)-hydroperoxy-(5Z,8Z,11Z,13E)-eicosatetraenoate = (14S,15S)-epoxy-(5Z,8Z,10E,12E)-eicosatetraenoate + H2O. It carries out the reaction (12S)-hydroperoxy-(5Z,8Z,10E,14Z)-eicosatetraenoate = (8S)-hydroxy-(11S,12S)-epoxy-(5Z,9E,14Z)-eicosatrienoate. It catalyses the reaction (4Z,7Z,10Z,13Z,16Z)-docosapentaenoate + O2 = 14-hydroperoxy-(4Z,7Z,10Z,12E,16Z)-docosapentaenoate. The enzyme catalyses (7Z,10Z,13Z,16Z,19Z)-docosapentaenoate + O2 = 14-hydroperoxy-(7Z,10Z,12E,16Z,19Z)-docosapentaenoate. The catalysed reaction is (4Z,7Z,10Z,13Z,16Z,19Z)-docosahexaenoate + O2 = (14S)-hydroperoxy-(4Z,7Z,10Z,12E,16Z,19Z)-docosahexaenoate. It carries out the reaction (4Z,7Z,10Z,13Z,16Z,19Z)-docosahexaenoate + O2 = (17S)-hydroperoxy-(4Z,7Z,10Z,13Z,15E,19Z)-docosahexaenoate. It catalyses the reaction (7S)-hydroperoxy-(4Z,8E,10Z,13Z,16Z,19Z)-docosahexaenoate + O2 = (7S,14S)-dihydroperoxy-(4Z,8E,10Z,12E,16Z,19Z)-docosahexaenoate. The enzyme catalyses (7S)-hydroperoxy-(4Z,8E,10Z,13Z,16Z,19Z)-docosahexaenoate + O2 = (7S,17S)-dihydroperoxy-(4Z,8E,10Z,13Z,15E,19Z)-docosahexaenoate. The catalysed reaction is (4Z,7Z,10Z,13Z,16Z,19Z)-docosahexaenoate + O2 = (11S)-hydroperoxy-(4Z,7Z,9E,13Z,16Z,19Z)-docosahexaenoate. It carries out the reaction N-(5Z,8Z,11Z,14Z)-eicosatetraenoyl-taurine + O2 = N-(15S)-hydroperoxy-(5Z,8Z,11Z,13E)-eicosatetraenoyl-taurine. It catalyses the reaction N-(5Z,8Z,11Z,14Z)-eicosatetraenoyl-gamma-aminobutanoate + O2 = N-(15S)-hydroperoxy-(5Z,8Z,11Z,13E)-eicosatetraenoyl-gamma-aminobutanoate. The enzyme catalyses N-(5Z,8Z,11Z,14Z)-eicosatetraenoyl-glycine + O2 = N-(15S)-hydroperoxy-(5Z,8Z,11Z,13E)-eicosatetraenoyl-glycine. The catalysed reaction is N-(5Z,8Z,11Z,14Z)-eicosatetraenoyl-L-alanine + O2 = N-(15S)-hydroperoxy-(5Z,8Z,11Z,13E)-eicosatetraenoyl-alanine. It carries out the reaction N-(5Z,8Z,11Z,14Z)-eicosatetraenoyl-taurine + O2 = N-(12S)-hydroperoxy-(5Z,8Z,10E,14Z)-eicosatetraenoyl-taurine. It catalyses the reaction N-(5Z,8Z,11Z,14Z)-eicosatetraenoyl-gamma-aminobutanoate + O2 = N-(12S)-hydroperoxy-(5Z,8Z,10E,14Z)-eicosatetraenoyl-gamma-aminobutanoate. The enzyme catalyses N-(5Z,8Z,11Z,14Z)-eicosatetraenoyl-glycine + O2 = N-(12S)-hydroperoxy-(5Z,8Z,10E,14Z)-eicosatetraenoyl-glycine. The catalysed reaction is N-(5Z,8Z,11Z,14Z)-eicosatetraenoyl-L-alanine + O2 = N-(12S)-hydroperoxy-(5Z,8Z,10E,14Z)-eicosatetraenoyl-alanine. The protein operates within lipid metabolism; hydroperoxy eicosatetraenoic acid biosynthesis. In terms of biological role, non-heme iron-containing dioxygenase that catalyzes the stereo-specific peroxidation of free and esterified polyunsaturated fatty acids generating a spectrum of bioactive lipid mediators. It inserts peroxyl groups at C12 or C15 of arachidonate ((5Z,8Z,11Z,14Z)-eicosatetraenoate) producing both 12-hydroperoxyeicosatetraenoate/12-HPETE and 15-hydroperoxyeicosatetraenoate/15-HPETE. It may then act on 12-HPETE to produce hepoxilins, which may show pro-inflammatory properties. Can also peroxidize linoleate ((9Z,12Z)-octadecadienoate) to 13-hydroperoxyoctadecadienoate. May participate in the sequential oxidations of DHA ((4Z,7Z,10Z,13Z,16Z,19Z)-docosahexaenoate) to generate specialized pro-resolving mediators (SPMs)like resolvin D5 ((7S,17S)-diHPDHA) and (7S,14S)-diHPDHA, that actively down-regulate the immune response and have anti-aggregation properties with platelets. Can convert epoxy fatty acids to hydroperoxy-epoxides derivatives followed by an intramolecular nucleophilic substitution leading to the formation of monocyclic endoperoxides. Plays an important role during the maintenance of self-tolerance by peroxidizing membrane-bound phosphatidylethanolamine which can then signal the sorting process for clearance of apoptotic cells during inflammation and prevent an autoimmune response. In addition to its role in the immune and inflammatory responses, this enzyme may play a role in epithelial wound healing in the cornea through production of lipoxin A4 (LXA(4)) and docosahexaenoic acid-derived neuroprotectin D1 (NPD1; 10R,17S-HDHA), both lipid autacoids exhibit anti-inflammatory and neuroprotective properties. Furthermore, it may regulate actin polymerization which is crucial for several biological processes such as the phagocytosis of apoptotic cells. It is also implicated in the generation of endogenous ligands for peroxisome proliferator activated receptor (PPAR-gamma), hence modulating macrophage development and function. It may also exert a negative effect on skeletal development by regulating bone mass through this pathway. As well as participates in ER stress and downstream inflammation in adipocytes, pancreatic islets, and liver. Finally, it is also involved in the cellular response to IL13/interleukin-13. This chain is Polyunsaturated fatty acid lipoxygenase ALOX15, found in Oryctolagus cuniculus (Rabbit).